The primary structure comprises 370 residues: Probable neutral protease 2 homolog TRV_02539 (370 aa).

An N-terminal signal peptide occupies residues 1 to 19 (MQLVAALAALGALVAPAVA). Residues 20 to 188 (YPHAPMNETL…SIHSRALQKR (169 aa)) constitute a propeptide that is removed on maturation. 2 disulfides stabilise this stretch: C196-C267 and C274-C292. A Zn(2+)-binding site is contributed by H316. Residue E317 is part of the active site. H320 and D331 together coordinate Zn(2+).

The protein belongs to the peptidase M35 family. The cofactor is Zn(2+).

It localises to the secreted. The enzyme catalyses Preferential cleavage of bonds with hydrophobic residues in P1'. Also 3-Asn-|-Gln-4 and 8-Gly-|-Ser-9 bonds in insulin B chain.. Probable secreted metalloprotease that shows high activities on basic nuclear substrates such as histone and protamine. May be involved in virulence. This chain is Probable neutral protease 2 homolog TRV_02539, found in Trichophyton verrucosum (strain HKI 0517).